A 1282-amino-acid polypeptide reads, in one-letter code: Crescerin-like protein che-12 (1282 aa).

2 TOG regions span residues 33 to 240 (DFDT…EHTE) and 268 to 515 (PSLV…MDSF). 8 HEAT repeats span residues 59 to 96 (QKKG…TFGS), 100 to 137 (YCMC…LKPE), 162 to 209 (ELHH…FIGN), 261 to 300 (RLRF…QITP), 308 to 345 (PHLH…HLKG), 349 to 386 (AHIQ…NINP), 388 to 421 (TVGG…TISP), and 424 to 461 (FNLQ…LLNG). Positions 566-714 (IQQQGQAEKP…RSFDDRPAKA (149 aa)) are disordered. Composition is skewed to low complexity over residues 575 to 592 (PSFS…HQAQ) and 633 to 644 (SAASNPNSSTSS). Residues 702-712 (DPPRSFDDRPA) show a composition bias toward basic and acidic residues. 2 TOG regions span residues 800 to 1022 (NMSV…ANVE) and 1066 to 1282 (TELL…ALIR). HEAT repeat units follow at residues 838-875 (DNLK…NLNS), 879-917 (SEME…AATA), 919-953 (KALQ…IQGS), 961-998 (NALS…DPNF), 1095-1132 (ASDT…SMAK), 1177-1214 (IEPV…LAYK), and 1219-1258 (QVEV…LIGE).

The protein belongs to the Crescerin family. As to expression, detected in a subset of amphid neurons that lack wing- or finger-like ciliary extensions. Likewise, detected in phasmid neurons.

Its subcellular location is the cell projection. It is found in the cilium. The protein localises to the perikaryon. It localises to the dendrite. In terms of biological role, required for normal structure and function of sensory cilia on amphid neurons, especially for the formation of distal ciliary structures, but is less important for normal assembly of middle and basal ciliary structures. Plays a role in the organization of axoneme microtubule bundles in sensory cilia. Required for normal structure and function of the ASER neuron that mediates attraction to NaCl. Required for normal chemotaxis to NaCl. Required for normal avoidance response to high osmolarity. In contrast, is not required for normal chemotaxis to isoamyl alcohol. Does not play a role in intraflagella transport (IFT). Promotes dauer formation in response to pheromones such as the ascarosides ascr#2, ascr#3, ascr#5, ascr#8 and icas#9. This Caenorhabditis elegans protein is Crescerin-like protein che-12.